The sequence spans 218 residues: SGKPVLHYFNVQGRMESIRWLLAAAGVEFEEKLIMCQEDLDKLKNDGLLMFQQVPMVEMDGMKMVQSRAILNYIATKYNLYGKDTKERLLIDMYTEGMTDLYELFFKVILAPPEEKDAAKSLIKDRAKNRFLPAFEKVLKSHGQGYLVGNKLSKADILLTELLYMVEEFDASLLANFTLLQALKTRVSNLPNVKKFLQPGSQRKPFPTQEMFEEMRKF.

Ser-1 bears the N-acetylserine mark. Residues 2-82 enclose the GST N-terminal domain; the sequence is GKPVLHYFNV…YIATKYNLYG (81 aa). The residue at position 3 (Lys-3) is an N6-succinyllysine. Glutathione is bound by residues Tyr-8, Lys-44, 53–54, and 66–67; these read QV and QS. The 123-residue stretch at 84 to 206 folds into the GST C-terminal domain; the sequence is DTKERLLIDM…LQPGSQRKPF (123 aa).

This sequence belongs to the GST superfamily. Alpha family. Homodimer or heterodimer of GSTA1 and GSTA2.

It localises to the cytoplasm. It catalyses the reaction RX + glutathione = an S-substituted glutathione + a halide anion + H(+). The enzyme catalyses prostaglandin A2 + glutathione = prostaglandin A2-S-(R)-glutathione. It carries out the reaction prostaglandin J2 + glutathione = prostaglandin J2-S-(R)-glutathione. The catalysed reaction is (13S)-hydroperoxy-(9Z,11E)-octadecadienoate + 2 glutathione = (13S)-hydroxy-(9Z,11E)-octadecadienoate + glutathione disulfide + H2O. It catalyses the reaction androst-5-ene-3,17-dione = androst-4-ene-3,17-dione. Functionally, glutathione S-transferase that catalyzes the nucleophilic attack of the sulfur atom of glutathione on the electrophilic groups of a wide range of exogenous and endogenous compounds. Involved in the formation of glutathione conjugates of both prostaglandin A2 (PGA2) and prostaglandin J2 (PGJ2). It also catalyzes the isomerization of D5-androstene-3,17-dione (AD) into D4-androstene-3,17-dione and may therefore play an important role in hormone biosynthesis. Through its glutathione-dependent peroxidase activity toward the fatty acid hydroperoxide (13S)-hydroperoxy-(9Z,11E)-octadecadienoate/13-HPODE it is also involved in the metabolism of oxidized linoleic acid. This Cavia porcellus (Guinea pig) protein is Glutathione S-transferase A.